We begin with the raw amino-acid sequence, 218 residues long: Octanoyltransferase (218 aa).

The region spanning 27-210 (TGGEDTLYLV…QFLAIFTHPA (184 aa)) is the BPL/LPL catalytic domain. Substrate-binding positions include 72–79 (RGGNITCH), 139–141 (SIG), and 152–154 (GLA). The active-site Acyl-thioester intermediate is cysteine 170.

This sequence belongs to the LipB family.

Its subcellular location is the cytoplasm. The enzyme catalyses octanoyl-[ACP] + L-lysyl-[protein] = N(6)-octanoyl-L-lysyl-[protein] + holo-[ACP] + H(+). Its pathway is protein modification; protein lipoylation via endogenous pathway; protein N(6)-(lipoyl)lysine from octanoyl-[acyl-carrier-protein]: step 1/2. Functionally, catalyzes the transfer of endogenously produced octanoic acid from octanoyl-acyl-carrier-protein onto the lipoyl domains of lipoate-dependent enzymes. Lipoyl-ACP can also act as a substrate although octanoyl-ACP is likely to be the physiological substrate. The chain is Octanoyltransferase from Nitratidesulfovibrio vulgaris (strain ATCC 29579 / DSM 644 / CCUG 34227 / NCIMB 8303 / VKM B-1760 / Hildenborough) (Desulfovibrio vulgaris).